We begin with the raw amino-acid sequence, 800 residues long: Probable inorganic carbon transporter subunit DabA (800 aa).

Residues Cys-329, Asp-331, His-488, and Cys-503 each coordinate Zn(2+).

The protein belongs to the inorganic carbon transporter (TC 9.A.2) DabA family. In terms of assembly, forms a complex with DabB. Zn(2+) serves as cofactor.

It is found in the cell inner membrane. Its function is as follows. Part of an energy-coupled inorganic carbon pump. The protein is Probable inorganic carbon transporter subunit DabA of Roseobacter denitrificans (strain ATCC 33942 / OCh 114) (Erythrobacter sp. (strain OCh 114)).